A 232-amino-acid polypeptide reads, in one-letter code: Clarin-2 (232 aa).

4 helical membrane-spanning segments follow: residues 8–28 (VWYG…IVAL), 101–121 (ILLL…FAIL), 139–159 (LWNV…MAAV), and 188–208 (SFWI…VVAI).

Belongs to the clarin family. As to expression, detected in inner ear, particularly in hair bundles of auditory hair cells and is enriched in apical stereocilia. Detected in eye, but not in brain or muscle.

It is found in the cell projection. It localises to the stereocilium membrane. In terms of biological role, plays a key role to hearing function. Required for normal organization and maintenance of the stereocilia bundle and for mechano-electrical transduction. The chain is Clarin-2 from Mus musculus (Mouse).